Reading from the N-terminus, the 449-residue chain is Glucose-6-phosphate isomerase (449 aa).

Residue Glu-291 is the Proton donor of the active site. Catalysis depends on residues His-312 and Lys-426.

This sequence belongs to the GPI family.

It localises to the cytoplasm. The catalysed reaction is alpha-D-glucose 6-phosphate = beta-D-fructose 6-phosphate. Its pathway is carbohydrate biosynthesis; gluconeogenesis. The protein operates within carbohydrate degradation; glycolysis; D-glyceraldehyde 3-phosphate and glycerone phosphate from D-glucose: step 2/4. In terms of biological role, catalyzes the reversible isomerization of glucose-6-phosphate to fructose-6-phosphate. This Streptococcus pyogenes serotype M49 (strain NZ131) protein is Glucose-6-phosphate isomerase.